The primary structure comprises 384 residues: Chaperone protein DnaJ (384 aa).

One can recognise a J domain in the interval 5 to 69; it reads DYYKVLGVDR…QKRAQYDQFG (65 aa). Residues 141–223 form a CR-type zinc finger; the sequence is GKKTQVSYTR…CGGKGTVERK (83 aa). 8 residues coordinate Zn(2+): C154, C157, C171, C174, C197, C200, C211, and C214. CXXCXGXG motif repeat units follow at residues 154–161, 171–178, 197–204, and 211–218; these read CETCGGNG, CDKCHGTG, CDKCNGRG, and CKTCGGKG.

Belongs to the DnaJ family. In terms of assembly, homodimer. The cofactor is Zn(2+).

It is found in the cytoplasm. In terms of biological role, participates actively in the response to hyperosmotic and heat shock by preventing the aggregation of stress-denatured proteins and by disaggregating proteins, also in an autonomous, DnaK-independent fashion. Unfolded proteins bind initially to DnaJ; upon interaction with the DnaJ-bound protein, DnaK hydrolyzes its bound ATP, resulting in the formation of a stable complex. GrpE releases ADP from DnaK; ATP binding to DnaK triggers the release of the substrate protein, thus completing the reaction cycle. Several rounds of ATP-dependent interactions between DnaJ, DnaK and GrpE are required for fully efficient folding. Also involved, together with DnaK and GrpE, in the DNA replication of plasmids through activation of initiation proteins. The polypeptide is Chaperone protein DnaJ (Lactobacillus acidophilus (strain ATCC 700396 / NCK56 / N2 / NCFM)).